A 483-amino-acid polypeptide reads, in one-letter code: MQKNLIWFRNDLRVYDNTALHQACQNDTDKVISLFISTPKQWHNQSVSKKKISFMYYHLISLQKELLKLNIILYYHESTDFLNSIEYLIFFCKKHKVNNLFYNYEYAINERYRDYLVKKKLSQKGFLVKGFHDNLLFSNRQIRNQKNETYKVFTFFKKKVIQNLHNNIPQCFPVPSKRKSDRDIFLTSISLKNVNLNFNKNFFPVGEKEAINRLKNFCIYKFNDYFLKRDYPFLDATSMLSPYLSAGIISSRYCLKVLLKTKNSLPLNVLLTSPWFDQILWREFYYHLLIGFPKISRSESLVTWEKEIHWINNIKHFNAWKEGNTGFPIIDAGMRQLNELGWMHNRLRMITSSFLVKNLLINWREGEEHFISNLIDGDLALNNGGWQWSASVGCDSVPYIRIFNPLHQSKTFDESGNFIKKFIPELKNVPNHHIHQPHEWSKQKNFKIDYPNPIINYSESRKTSLSLFKQARLKLHKNGLKNS.

Residues 2–136 enclose the Photolyase/cryptochrome alpha/beta domain; it reads QKNLIWFRND…LVKGFHDNLL (135 aa). N109 and E110 together coordinate (6R)-5,10-methylene-5,6,7,8-tetrahydrofolate. Y225 provides a ligand contact to FAD. R229 provides a ligand contact to DNA. 237–241 is an FAD binding site; that stretch reads TSMLS. Interaction with DNA regions lie at residues 278-285 and 345-346; these read QILWREFY and NR. 376–378 contacts FAD; it reads DGD. Q408 lines the DNA pocket.

The protein belongs to the DNA photolyase class-1 family. As to quaternary structure, monomer. FAD serves as cofactor. The cofactor is (6R)-5,10-methylene-5,6,7,8-tetrahydrofolate.

It catalyses the reaction cyclobutadipyrimidine (in DNA) = 2 pyrimidine residues (in DNA).. Its function is as follows. Involved in repair of UV radiation-induced DNA damage. Catalyzes the light-dependent monomerization (300-600 nm) of cyclobutyl pyrimidine dimers (in cis-syn configuration), which are formed between adjacent bases on the same DNA strand upon exposure to ultraviolet radiation. In Buchnera aphidicola subsp. Acyrthosiphon pisum (strain APS) (Acyrthosiphon pisum symbiotic bacterium), this protein is Deoxyribodipyrimidine photo-lyase (phrB).